Consider the following 448-residue polypeptide: Phosphoglucosamine mutase (448 aa).

Serine 100 functions as the Phosphoserine intermediate in the catalytic mechanism. Mg(2+) is bound by residues serine 100, aspartate 240, aspartate 242, and aspartate 244. Phosphoserine is present on serine 100.

It belongs to the phosphohexose mutase family. The cofactor is Mg(2+). In terms of processing, activated by phosphorylation.

The catalysed reaction is alpha-D-glucosamine 1-phosphate = D-glucosamine 6-phosphate. Its function is as follows. Catalyzes the conversion of glucosamine-6-phosphate to glucosamine-1-phosphate. This Bacillus cereus (strain G9842) protein is Phosphoglucosamine mutase.